Consider the following 45-residue polypeptide: Photosystem II reaction center protein K (45 aa).

Positions 1–8 are excised as a propeptide; sequence MELMLLFA. A helical membrane pass occupies residues 24–44; that stretch reads LPVIPVLFLALAFVWQASVGF.

The protein belongs to the PsbK family. PSII is composed of 1 copy each of membrane proteins PsbA, PsbB, PsbC, PsbD, PsbE, PsbF, PsbH, PsbI, PsbJ, PsbK, PsbL, PsbM, PsbT, PsbX, PsbY, PsbZ, Psb30/Ycf12, peripheral proteins PsbO, CyanoQ (PsbQ), PsbU, PsbV and a large number of cofactors. It forms dimeric complexes.

It localises to the cellular thylakoid membrane. One of the components of the core complex of photosystem II (PSII). PSII is a light-driven water:plastoquinone oxidoreductase that uses light energy to abstract electrons from H(2)O, generating O(2) and a proton gradient subsequently used for ATP formation. It consists of a core antenna complex that captures photons, and an electron transfer chain that converts photonic excitation into a charge separation. The protein is Photosystem II reaction center protein K of Cyanothece sp. (strain PCC 7425 / ATCC 29141).